Reading from the N-terminus, the 290-residue chain is Tegument protein VP22 (290 aa).

Over residues 98-112 (STSHGRLSPTKTTPH) the composition is skewed to polar residues. Positions 98–156 (STSHGRLSPTKTTPHPKSAGVTPPQRVPARPATRAAAPSATPTQPDCVAKQRTSPGVNS) are disordered. A compositionally biased stretch (low complexity) spans 118–142 (VTPPQRVPARPATRAAAPSATPTQP). Positions 146–149 (AKQR) match the Nuclear localization signal motif. Residues 219-231 (LDRFLKAAAIRIL) carry the Nuclear export signal motif.

This sequence belongs to the alphaherpesvirinae VP22 tegument protein family. In terms of assembly, interacts with gE (via C-terminus); this interaction is necessary for the recruitment of VP22 to the Golgi and its packaging into virions. Interacts with gM (via C-terminus). Interacts with VP16; this interaction allows the formation of a tripartite complex composed of VP16, VP22 and UL41/VHS. Interacts with the capsid-binding protein UL16. Interacts with host CGAS. Highly phosphorylated in the host cell. Packaging is selective for underphosphorylated forms.

The protein localises to the virion tegument. It is found in the host cytoplasm. The protein resides in the host nucleus. Its subcellular location is the host Golgi apparatus. Its function is as follows. Tegument protein that plays different roles during the time course of infection. Participates in both the accumulation of viral mRNAs and viral protein translation at late time of infection. Modulates the RNase activity of the virion host shutoff protein UL41 probably to ensure necessary levels of key cellular mRNAs and proteins. Plays a role in microtubule reorganization that occurs after viral infection by stabilizing microtubule network. Plays a role in the inhibition of host innate immune system by targeting the CGAS enzymatic activity which is the principal cytosolic DNA sensor that detects invading viral DNA. Acts by mediating disruption of liquid-like droplets in which CGAS is activated, thereby preventing CGAS activity. This Equus caballus (Horse) protein is Tegument protein VP22 (11).